Reading from the N-terminus, the 130-residue chain is Albumin-1 A (130 aa).

The N-terminal stretch at 1–26 is a signal peptide; sequence MASVKLASLIVLFATLGMFLTKNVGA. Cystine bridges form between Cys-29/Cys-46, Cys-33/Cys-48, and Cys-41/Cys-58. 2 propeptides span residues 64–69 and 123–130; these read VFLRTN and LLKSVSTA.

Post-translationally, the C-terminal glycine may be removed from PA1b. As to expression, major component of both the cotyledons and embryonic axes of mature seeds.

PA1b binds to basic 7S globulin (BG) and stimulates its phosphorylation activity. Involved in the signal transduction system to regulate the growth and differentiation as a hormone peptide. Toxic to various insects through binding to a high affinity binding site in the insect gut. The sequence is that of Albumin-1 A from Pisum sativum (Garden pea).